The sequence spans 317 residues: Transaldolase (317 aa).

K126 functions as the Schiff-base intermediate with substrate in the catalytic mechanism.

This sequence belongs to the transaldolase family. Type 1 subfamily. In terms of assembly, homodimer.

The protein resides in the cytoplasm. It carries out the reaction D-sedoheptulose 7-phosphate + D-glyceraldehyde 3-phosphate = D-erythrose 4-phosphate + beta-D-fructose 6-phosphate. It participates in carbohydrate degradation; pentose phosphate pathway; D-glyceraldehyde 3-phosphate and beta-D-fructose 6-phosphate from D-ribose 5-phosphate and D-xylulose 5-phosphate (non-oxidative stage): step 2/3. In terms of biological role, transaldolase is important for the balance of metabolites in the pentose-phosphate pathway. The polypeptide is Transaldolase (Burkholderia orbicola (strain MC0-3)).